The following is a 229-amino-acid chain: Flagellar L-ring protein (229 aa).

Positions 1–25 are cleaved as a signal peptide; the sequence is MKQVRLLPSAPVRAVCALAVAALAG. C26 carries the N-palmitoyl cysteine lipid modification. A lipid anchor (S-diacylglycerol cysteine) is attached at C26.

Belongs to the FlgH family. The basal body constitutes a major portion of the flagellar organelle and consists of four rings (L,P,S, and M) mounted on a central rod.

It localises to the cell outer membrane. The protein resides in the bacterial flagellum basal body. Its function is as follows. Assembles around the rod to form the L-ring and probably protects the motor/basal body from shearing forces during rotation. The sequence is that of Flagellar L-ring protein from Burkholderia ambifaria (strain MC40-6).